We begin with the raw amino-acid sequence, 242 residues long: Biosynthetic peptidoglycan transglycosylase (242 aa).

A helical membrane pass occupies residues 19–39 (LMVVLAIFWGGGIALFSVAPV).

It belongs to the glycosyltransferase 51 family.

The protein resides in the cell inner membrane. It catalyses the reaction [GlcNAc-(1-&gt;4)-Mur2Ac(oyl-L-Ala-gamma-D-Glu-L-Lys-D-Ala-D-Ala)](n)-di-trans,octa-cis-undecaprenyl diphosphate + beta-D-GlcNAc-(1-&gt;4)-Mur2Ac(oyl-L-Ala-gamma-D-Glu-L-Lys-D-Ala-D-Ala)-di-trans,octa-cis-undecaprenyl diphosphate = [GlcNAc-(1-&gt;4)-Mur2Ac(oyl-L-Ala-gamma-D-Glu-L-Lys-D-Ala-D-Ala)](n+1)-di-trans,octa-cis-undecaprenyl diphosphate + di-trans,octa-cis-undecaprenyl diphosphate + H(+). It functions in the pathway cell wall biogenesis; peptidoglycan biosynthesis. Functionally, peptidoglycan polymerase that catalyzes glycan chain elongation from lipid-linked precursors. The polypeptide is Biosynthetic peptidoglycan transglycosylase (Escherichia coli O81 (strain ED1a)).